Reading from the N-terminus, the 173-residue chain is RNA silencing suppressor p19 (173 aa).

The segment covering 1 to 21 (MERAIQRSDAREQANSERWDG) has biased composition (basic and acidic residues). The disordered stretch occupies residues 1–34 (MERAIQRSDAREQANSERWDGRCGGTITPFKLPD).

It belongs to the tombusvirus protein p19 family. As to quaternary structure, homodimer.

Functionally, viral suppressor of RNA silencing which binds specifically to silencing RNAs (siRNAs). Acts as a molecular caliper to specifically select siRNAs based on the length of the duplex region of the RNA. This chain is RNA silencing suppressor p19, found in Cucumis sativus (Cucumber).